The sequence spans 206 residues: MSYSDQRELAPHMALVPMVVEQTSRGERSYDIFSRLLKERIIFLTGQVEDHMANLIVAQMLFLEAENPEKDIHLYINSPGGVITAGMSIYDTMQFIKPDVSTICMGQACSMGSFLLAAGAQGKRFCLPNSRVMIHQPLGGFQGQATDIEIHAKEILSIKARMNTLMAKHSGQPIEVIERDTERDRFMSAQDAVEYGLVDAVLTQRA.

Residue S110 is the Nucleophile of the active site. Residue H135 is part of the active site.

This sequence belongs to the peptidase S14 family. In terms of assembly, fourteen ClpP subunits assemble into 2 heptameric rings which stack back to back to give a disk-like structure with a central cavity, resembling the structure of eukaryotic proteasomes.

Its subcellular location is the cytoplasm. It carries out the reaction Hydrolysis of proteins to small peptides in the presence of ATP and magnesium. alpha-casein is the usual test substrate. In the absence of ATP, only oligopeptides shorter than five residues are hydrolyzed (such as succinyl-Leu-Tyr-|-NHMec, and Leu-Tyr-Leu-|-Tyr-Trp, in which cleavage of the -Tyr-|-Leu- and -Tyr-|-Trp bonds also occurs).. Functionally, cleaves peptides in various proteins in a process that requires ATP hydrolysis. Has a chymotrypsin-like activity. Plays a major role in the degradation of misfolded proteins. The sequence is that of ATP-dependent Clp protease proteolytic subunit from Edwardsiella ictaluri (strain 93-146).